A 254-amino-acid polypeptide reads, in one-letter code: Autophagy-related protein 5 (254 aa).

Lysine 102 is covalently cross-linked (Glycyl lysine isopeptide (Lys-Gly) (interchain with G-Cter in ATG12)).

It belongs to the ATG5 family. In terms of assembly, conjugated with ATG12. The ATG5-ATG12 conjugate forms a complex with several units of ATG16. The ATG12-ATG5 conjugate also associates with ATG3. Conjugated to ATG12; which is essential for autophagy. Conjugation with ATG12 involves ATG7 as an E1-like activating enzyme and ATG10 as an E2-like conjugating enzyme.

The protein resides in the preautophagosomal structure membrane. Its function is as follows. Involved in cytoplasm to vacuole transport (Cvt) and autophagic vesicle formation. Autophagy is essential for maintenance of amino acid levels and protein synthesis under nitrogen starvation. Required for selective autophagic degradation of the nucleus (nucleophagy). Also required for mitophagy, which eliminates defective or superfluous mitochondria in order to fulfill cellular energy requirements and prevent excess ROS production. Conjugation with ATG12, through a ubiquitin-like conjugating system involving ATG7 as an E1-like activating enzyme and ATG10 as an E2-like conjugating enzyme, is essential for its function. The ATG12-ATG5 conjugate acts as an E3-like enzyme which is required for lipidation of ATG8 and ATG8 association to the vesicle membranes. ATG12-ATG5 rearranges the ATG3 catalytic center and enhances its E2 activity. Autophagy is required for proper vegetative growth, asexual/sexual reproduction, and full virulence. Autophagy is particularly involved in the biosynthesis of deoxynivalenol (DON), an important virulence determinant. The sequence is that of Autophagy-related protein 5 from Gibberella zeae (strain ATCC MYA-4620 / CBS 123657 / FGSC 9075 / NRRL 31084 / PH-1) (Wheat head blight fungus).